The following is a 195-amino-acid chain: Interferon omega-1 (195 aa).

The N-terminal stretch at 1 to 23 (MAFSVSSLMALVVISSSPVSSMS) is a signal peptide. 2 disulfide bridges follow: Cys-24–Cys-122 and Cys-52–Cys-162. An N-linked (GlcNAc...) asparagine glycan is attached at Asn-101.

This sequence belongs to the alpha/beta interferon family.

It localises to the secreted. The sequence is that of Interferon omega-1 from Equus caballus (Horse).